The primary structure comprises 58 residues: Teratocyte protein CftICK-III (58 aa).

A signal peptide spans 1 to 24 (MQKFMRLFFLGLFFILFMTTQIKA). 3 cysteine pairs are disulfide-bonded: cysteine 27-cysteine 42, cysteine 34-cysteine 47, and cysteine 41-cysteine 55.

In terms of tissue distribution, abundantly expressed by teratocytes, which are extra-embryonic cells released by parasitoid wasps into their hosts during larval eclosion.

It localises to the secreted. In terms of biological role, this endoparasitoid wasp peptide has immununosuppressive and insecticidal activities. Suppress cellular immunity which is detectable as a reduction of hemocyte encapsulation in the host. In vivo, ingestion of this peptide (probably at excessive doses) increases larval mortality and reduces leaf consumption in both lepidopteran species D.saccharalis and S.frugiperda, which are permissive and non-permissive hosts for C.flavipes, respectively. This Cotesia flavipes (Parasitic wasp) protein is Teratocyte protein CftICK-III.